Here is a 385-residue protein sequence, read N- to C-terminus: Cell division protein FtsZ (385 aa).

Residues 20 to 24, 107 to 109, E138, R142, and N186 each bind GTP; these read GGGGN and GTG.

It belongs to the FtsZ family. In terms of assembly, homodimer. Polymerizes to form a dynamic ring structure in a strictly GTP-dependent manner. Interacts directly with several other division proteins.

It localises to the cytoplasm. Functionally, essential cell division protein that forms a contractile ring structure (Z ring) at the future cell division site. The regulation of the ring assembly controls the timing and the location of cell division. One of the functions of the FtsZ ring is to recruit other cell division proteins to the septum to produce a new cell wall between the dividing cells. Binds GTP and shows GTPase activity. This Buchnera aphidicola subsp. Baizongia pistaciae (strain Bp) protein is Cell division protein FtsZ.